Consider the following 316-residue polypeptide: UDP-N-acetylenolpyruvoylglucosamine reductase (316 aa).

An FAD-binding PCMH-type domain is found at valine 27 to lysine 225. Arginine 190 is an active-site residue. Catalysis depends on serine 239, which acts as the Proton donor. Glutamate 309 is an active-site residue.

The protein belongs to the MurB family. FAD is required as a cofactor.

The protein resides in the cytoplasm. The catalysed reaction is UDP-N-acetyl-alpha-D-muramate + NADP(+) = UDP-N-acetyl-3-O-(1-carboxyvinyl)-alpha-D-glucosamine + NADPH + H(+). It participates in cell wall biogenesis; peptidoglycan biosynthesis. Its function is as follows. Cell wall formation. The protein is UDP-N-acetylenolpyruvoylglucosamine reductase of Coxiella burnetii (strain Dugway 5J108-111).